The chain runs to 319 residues: ATP-dependent 6-phosphofructokinase (319 aa).

Gly-11 is an ATP binding site. Residue 21–25 (RAVVR) participates in ADP binding. Residues 72–73 (RC) and 102–105 (GDGS) each bind ATP. Asp-103 contacts Mg(2+). 125–127 (TID) contacts substrate. The Proton acceptor role is filled by Asp-127. Arg-154 contacts ADP. Substrate is bound by residues Arg-162 and 169–171 (MGR). Residues 185–187 (GAE), Arg-211, and 213–215 (KKH) contribute to the ADP site. Residues Glu-222, Arg-243, and 249-252 (HIQR) each bind substrate.

It belongs to the phosphofructokinase type A (PFKA) family. ATP-dependent PFK group I subfamily. Prokaryotic clade 'B1' sub-subfamily. In terms of assembly, homotetramer. Mg(2+) is required as a cofactor.

It localises to the cytoplasm. The enzyme catalyses beta-D-fructose 6-phosphate + ATP = beta-D-fructose 1,6-bisphosphate + ADP + H(+). It participates in carbohydrate degradation; glycolysis; D-glyceraldehyde 3-phosphate and glycerone phosphate from D-glucose: step 3/4. Allosterically activated by ADP and other diphosphonucleosides, and allosterically inhibited by phosphoenolpyruvate. Its function is as follows. Catalyzes the phosphorylation of D-fructose 6-phosphate to fructose 1,6-bisphosphate by ATP, the first committing step of glycolysis. This Halalkalibacterium halodurans (strain ATCC BAA-125 / DSM 18197 / FERM 7344 / JCM 9153 / C-125) (Bacillus halodurans) protein is ATP-dependent 6-phosphofructokinase.